Reading from the N-terminus, the 236-residue chain is Probable 2-phosphosulfolactate phosphatase (236 aa).

It belongs to the ComB family. Mg(2+) is required as a cofactor.

The catalysed reaction is (2R)-O-phospho-3-sulfolactate + H2O = (2R)-3-sulfolactate + phosphate. The sequence is that of Probable 2-phosphosulfolactate phosphatase from Gloeobacter violaceus (strain ATCC 29082 / PCC 7421).